Reading from the N-terminus, the 32-residue chain is Ovostatin (32 aa).

The isoglutamyl cysteine thioester (Cys-Gln) cross-link spans 27–30; the sequence is CGEQ.

Belongs to the protease inhibitor I39 (alpha-2-macroglobulin) family. Homotetramer, which consists of two pairs of disulfide-linked chains.

The protein resides in the secreted. Is able to inhibit all four classes of proteinases by a unique 'trapping' mechanism. This protein has a peptide stretch, called the 'bait region' which contains specific cleavage sites for different proteinases. When a proteinase cleaves the bait region, a conformational change is induced in the protein which traps the proteinase. The entrapped enzyme remains active against low molecular weight substrates (activity against high molecular weight substrates is greatly reduced). Following cleavage in the bait region a thioester bond is hydrolyzed and mediates the covalent binding of the protein to the proteinase. The polypeptide is Ovostatin (Anas platyrhynchos (Mallard)).